Consider the following 208-residue polypeptide: Large ribosomal subunit protein uL3 (208 aa).

Residues 134–159 (SKFHREAGSTGHCTTPGRSFKNTTMP) are disordered. The span at 144–158 (GHCTTPGRSFKNTTM) shows a compositional bias: polar residues.

The protein belongs to the universal ribosomal protein uL3 family. In terms of assembly, part of the 50S ribosomal subunit. Forms a cluster with proteins L14 and L19.

In terms of biological role, one of the primary rRNA binding proteins, it binds directly near the 3'-end of the 23S rRNA, where it nucleates assembly of the 50S subunit. This Treponema denticola (strain ATCC 35405 / DSM 14222 / CIP 103919 / JCM 8153 / KCTC 15104) protein is Large ribosomal subunit protein uL3.